The sequence spans 98 residues: Beta-2-microglobulin (98 aa).

The region spanning proline 4 to tyrosine 92 is the Ig-like C1-type domain. Cysteine 24 and cysteine 79 are oxidised to a cystine.

It belongs to the beta-2-microglobulin family. Heterodimer of an alpha chain and a beta chain. Beta-2-microglobulin is the beta-chain of major histocompatibility complex class I molecules.

Its subcellular location is the secreted. Its function is as follows. Component of the class I major histocompatibility complex (MHC). Involved in the presentation of peptide antigens to the immune system. This chain is Beta-2-microglobulin (B2M), found in Meleagris gallopavo (Wild turkey).